A 374-amino-acid chain; its full sequence is Ribosomal RNA large subunit methyltransferase G (374 aa).

It belongs to the methyltransferase superfamily. RlmG family.

The protein resides in the cytoplasm. The enzyme catalyses guanosine(1835) in 23S rRNA + S-adenosyl-L-methionine = N(2)-methylguanosine(1835) in 23S rRNA + S-adenosyl-L-homocysteine + H(+). Functionally, specifically methylates the guanine in position 1835 (m2G1835) of 23S rRNA. In Pseudomonas fluorescens (strain Pf0-1), this protein is Ribosomal RNA large subunit methyltransferase G.